We begin with the raw amino-acid sequence, 708 residues long: Exocyst complex component 5 (708 aa).

Position 2 is an N-acetylalanine (Ala2). A coiled-coil region spans residues 40 to 101 (KRLLEEFVNH…AFQHFQELDE (62 aa)). Phosphothreonine is present on residues Thr122, Thr395, and Thr405. The residue at position 412 (Ser412) is a Phosphoserine.

Belongs to the SEC10 family. As to quaternary structure, the exocyst complex is composed of EXOC1, EXOC2, EXOC3, EXOC4, EXOC5, EXOC6, EXOC7 and EXOC8. Interacts with EXOC3L1. In terms of tissue distribution, ubiquitous.

The protein localises to the cytoplasm. Its subcellular location is the midbody. Its function is as follows. Component of the exocyst complex involved in the docking of exocytic vesicles with fusion sites on the plasma membrane. The sequence is that of Exocyst complex component 5 (EXOC5) from Homo sapiens (Human).